Consider the following 73-residue polypeptide: Omega-conotoxin CVID (73 aa).

Residues 1-22 (MKLTCVVIVAVLLLTACQLITA) form the signal peptide. A propeptide spanning residues 23 to 45 (DDSRGTQKHRALRSDTKLSMSTR) is cleaved from the precursor. Cystine bridges form between cysteine 46/cysteine 61, cysteine 53/cysteine 65, and cysteine 60/cysteine 72. Cysteine 72 bears the Cysteine amide mark.

This sequence belongs to the conotoxin O1 superfamily. As to expression, expressed by the venom duct.

Its subcellular location is the secreted. Functionally, omega-conotoxins act at presynaptic membranes, they bind and block voltage-gated calcium channels. This toxin inhibits neurotransmitter release, it blocks N-type calcium channels, probably a N-type (Cav2.2/CACNA1B) calcium channel variant. The chain is Omega-conotoxin CVID from Conus catus (Cat cone).